The following is a 216-amino-acid chain: Pyrophosphatase PpaX (216 aa).

Asp9 functions as the Nucleophile in the catalytic mechanism.

Belongs to the HAD-like hydrolase superfamily. PpaX family. The cofactor is Mg(2+).

It catalyses the reaction diphosphate + H2O = 2 phosphate + H(+). Its function is as follows. Hydrolyzes pyrophosphate formed during P-Ser-HPr dephosphorylation by HPrK/P. Might play a role in controlling the intracellular pyrophosphate pool. The sequence is that of Pyrophosphatase PpaX from Bacillus thuringiensis (strain Al Hakam).